Consider the following 492-residue polypeptide: Cysteine--tRNA ligase (492 aa).

Cysteine 31 provides a ligand contact to Zn(2+). The short motif at 33–43 is the 'HIGH' region element; that stretch reads PTVYGDPHLGH. Zn(2+) contacts are provided by cysteine 226, histidine 251, and glutamate 255. A 'KMSKS' region motif is present at residues 283-287; that stretch reads KMGKS. Residue lysine 286 coordinates ATP.

It belongs to the class-I aminoacyl-tRNA synthetase family. As to quaternary structure, monomer. Zn(2+) is required as a cofactor.

The protein resides in the cytoplasm. It catalyses the reaction tRNA(Cys) + L-cysteine + ATP = L-cysteinyl-tRNA(Cys) + AMP + diphosphate. The polypeptide is Cysteine--tRNA ligase (Azobacteroides pseudotrichonymphae genomovar. CFP2).